The sequence spans 194 residues: Probable WRKY transcription factor 51 (194 aa).

Residues 58–97 form a disordered region; that stretch reads SSETFTGESGGSGSATTLSKKESTNRGSKESDQTKETGHR. Positions 76-96 are enriched in basic and acidic residues; that stretch reads SKKESTNRGSKESDQTKETGH. The segment at residues 104–169 is a DNA-binding region (WRKY); that stretch reads SKIDVMDDGF…YEGVHNHESL (66 aa).

The protein belongs to the WRKY group II-c family. Interacts with CAMBP25/VQ15.

It localises to the nucleus. In terms of biological role, transcription factor. Interacts specifically with the W box (5'-(T)TGAC[CT]-3'), a frequently occurring elicitor-responsive cis-acting element. Involved in defense responses. May act as positive regulator of salicylic acid (SA)-mediated signaling and negative regulator of jasmonic acid (JA)-mediated signaling. The chain is Probable WRKY transcription factor 51 (WRKY51) from Arabidopsis thaliana (Mouse-ear cress).